The following is a 312-amino-acid chain: Formate dehydrogenase iron-sulfur subunit (312 aa).

4Fe-4S ferredoxin-type domains follow at residues 35 to 65, 97 to 129, 130 to 159, and 164 to 195; these read IAKL…SDIN, LEWL…QYAN, GIVD…MNPE, and YKCT…FGSK. [4Fe-4S] cluster-binding residues include Cys44, Cys47, Cys50, Cys54, Cys106, Cys109, Cys114, Cys118, Cys139, Cys142, Cys145, Cys149, Cys166, Cys169, Cys181, and Cys185.

In terms of assembly, formate dehydrogenase is a membrane-bound complex, formed by subunits alpha, beta and gamma. [4Fe-4S] cluster serves as cofactor.

It is found in the cell membrane. In terms of biological role, allows to use formate as major electron donor during aerobic respiration. The beta chain is an electron transfer unit containing 4 cysteine clusters involved in the formation of iron-sulfur centers. Electrons are transferred from the gamma chain to the molybdenum cofactor of the alpha subunit. The sequence is that of Formate dehydrogenase iron-sulfur subunit (fdxH) from Haemophilus influenzae (strain ATCC 51907 / DSM 11121 / KW20 / Rd).